The primary structure comprises 339 residues: UDP-N-acetylglucosamine--N-acetylmuramyl-(pentapeptide) pyrophosphoryl-undecaprenol N-acetylglucosamine transferase (339 aa).

UDP-N-acetyl-alpha-D-glucosamine is bound by residues 11–13, Asn127, Arg170, Ser188, Ile235, and Gln280; that span reads TGG.

This sequence belongs to the glycosyltransferase 28 family. MurG subfamily.

The protein localises to the cell inner membrane. It carries out the reaction di-trans,octa-cis-undecaprenyl diphospho-N-acetyl-alpha-D-muramoyl-L-alanyl-D-glutamyl-meso-2,6-diaminopimeloyl-D-alanyl-D-alanine + UDP-N-acetyl-alpha-D-glucosamine = di-trans,octa-cis-undecaprenyl diphospho-[N-acetyl-alpha-D-glucosaminyl-(1-&gt;4)]-N-acetyl-alpha-D-muramoyl-L-alanyl-D-glutamyl-meso-2,6-diaminopimeloyl-D-alanyl-D-alanine + UDP + H(+). Its pathway is cell wall biogenesis; peptidoglycan biosynthesis. Functionally, cell wall formation. Catalyzes the transfer of a GlcNAc subunit on undecaprenyl-pyrophosphoryl-MurNAc-pentapeptide (lipid intermediate I) to form undecaprenyl-pyrophosphoryl-MurNAc-(pentapeptide)GlcNAc (lipid intermediate II). This Thermotoga petrophila (strain ATCC BAA-488 / DSM 13995 / JCM 10881 / RKU-1) protein is UDP-N-acetylglucosamine--N-acetylmuramyl-(pentapeptide) pyrophosphoryl-undecaprenol N-acetylglucosamine transferase.